The primary structure comprises 332 residues: Glycerol-3-phosphate dehydrogenase [NAD(P)+] (332 aa).

NADPH is bound by residues Ser-11, Phe-12, Lys-32, and Lys-106. Sn-glycerol 3-phosphate contacts are provided by Lys-106, Gly-137, and Ser-139. An NADPH-binding site is contributed by Ala-141. Sn-glycerol 3-phosphate-binding residues include Lys-192, Asp-245, Ser-255, Arg-256, and Asn-257. Catalysis depends on Lys-192, which acts as the Proton acceptor. NADPH is bound at residue Arg-256. Residues Val-280 and Glu-282 each coordinate NADPH.

Belongs to the NAD-dependent glycerol-3-phosphate dehydrogenase family.

The protein localises to the cytoplasm. The catalysed reaction is sn-glycerol 3-phosphate + NAD(+) = dihydroxyacetone phosphate + NADH + H(+). It catalyses the reaction sn-glycerol 3-phosphate + NADP(+) = dihydroxyacetone phosphate + NADPH + H(+). The protein operates within membrane lipid metabolism; glycerophospholipid metabolism. In terms of biological role, catalyzes the reduction of the glycolytic intermediate dihydroxyacetone phosphate (DHAP) to sn-glycerol 3-phosphate (G3P), the key precursor for phospholipid synthesis. The chain is Glycerol-3-phosphate dehydrogenase [NAD(P)+] from Staphylococcus aureus (strain Mu3 / ATCC 700698).